A 76-amino-acid chain; its full sequence is Omega-agatoxin-Aa3b (76 aa).

6 cysteine pairs are disulfide-bonded: Cys2/Cys19, Cys9/Cys25, Cys16/Cys52, Cys18/Cys40, Cys27/Cys38, and Cys59/Cys67.

Belongs to the neurotoxin 04 (omega-agtx) family. 03 (type II/III omega-agtx) subfamily. As to expression, expressed by the venom gland.

The protein resides in the secreted. Its function is as follows. Omega-agatoxins are antagonists of voltage-gated calcium channels. This toxin blocks calcium channels in insect central neurons but not at peripheral neuromuscular junctions. In vertebrates, it is broadly active against all high-threshold Cav1/CACNA1 channels and Cav2.2/CACNA1B channels. This Agelenopsis aperta (North American funnel-web spider) protein is Omega-agatoxin-Aa3b.